We begin with the raw amino-acid sequence, 420 residues long: MAILTLGVNHTTAPVSIRERLAFPAEQLQSALRDLIDLPQVGEAAILSTCNRTEVYCELDGRDQRPIVDWMCDQRQFDDQDISQYLYSHFDAGTIRHMFRVACGLDSMILGEPQILGQMKTAYQAAREAGTVGKILTKLFHRTFAAAKKVRTDTAIGCSPVSVAFAAIRLAQRIFDDLGDLTAILVGAGETIELTARHLTENRIGHLIIANRTFDRAHTLANQFGGFAISLEELPKHLAKADIIVASTGSPLPILGKGSFESALRSRRHKPMFIVDLAVPRDIEPEVEQLQDVYLYTVDDLQHTVEENLKTRQEAALQAEEIIDLEVEHFLSWLRAQAATETIRDVRRQAELHRDAALQRALRELRRGKSAEDTLRWLADTLTNKIIHAPSSQIWQAGVNERADIVAAARELFQLKDPDT.

Substrate contacts are provided by residues Thr49–Arg52, Ser107, Glu112–Gln114, and Gln118. Residue Cys50 is the Nucleophile of the active site. Gly187–Ile192 provides a ligand contact to NADP(+).

It belongs to the glutamyl-tRNA reductase family. In terms of assembly, homodimer.

The enzyme catalyses (S)-4-amino-5-oxopentanoate + tRNA(Glu) + NADP(+) = L-glutamyl-tRNA(Glu) + NADPH + H(+). Its pathway is porphyrin-containing compound metabolism; protoporphyrin-IX biosynthesis; 5-aminolevulinate from L-glutamyl-tRNA(Glu): step 1/2. Its function is as follows. Catalyzes the NADPH-dependent reduction of glutamyl-tRNA(Glu) to glutamate 1-semialdehyde (GSA). This Methylococcus capsulatus (strain ATCC 33009 / NCIMB 11132 / Bath) protein is Glutamyl-tRNA reductase.